Here is a 153-residue protein sequence, read N- to C-terminus: ATP synthase subunit b' (153 aa).

The helical transmembrane segment at 23–40 (LMAIQVVALTYILNSLFF) threads the bilayer.

It belongs to the ATPase B chain family. F-type ATPases have 2 components, F(1) - the catalytic core - and F(0) - the membrane proton channel. F(1) has five subunits: alpha(3), beta(3), gamma(1), delta(1), epsilon(1). F(0) has four main subunits: a(1), b(1), b'(1) and c(10-14). The alpha and beta chains form an alternating ring which encloses part of the gamma chain. F(1) is attached to F(0) by a central stalk formed by the gamma and epsilon chains, while a peripheral stalk is formed by the delta, b and b' chains.

Its subcellular location is the cellular thylakoid membrane. Functionally, f(1)F(0) ATP synthase produces ATP from ADP in the presence of a proton or sodium gradient. F-type ATPases consist of two structural domains, F(1) containing the extramembraneous catalytic core and F(0) containing the membrane proton channel, linked together by a central stalk and a peripheral stalk. During catalysis, ATP synthesis in the catalytic domain of F(1) is coupled via a rotary mechanism of the central stalk subunits to proton translocation. Component of the F(0) channel, it forms part of the peripheral stalk, linking F(1) to F(0). The b'-subunit is a diverged and duplicated form of b found in plants and photosynthetic bacteria. The protein is ATP synthase subunit b' of Prochlorococcus marinus (strain MIT 9301).